A 114-amino-acid chain; its full sequence is uncharacterized protein (114 aa).

The interval 1-24 (MFGACYKQPLKPSGSEPPAEECRM) is disordered.

As to expression, expressed in kidney and liver.

This is an uncharacterized protein from Homo sapiens (Human).